We begin with the raw amino-acid sequence, 99 residues long: MSQISRDEVAHLARLARLALTEDELDGFAGQLDAILGHVSQIQSVDVTGVEPTDNPLKDVNVTRPDTVQPCLTQDEALAAAPKAADGRFAVPRILGEPE.

The protein belongs to the GatC family. Heterotrimer of A, B and C subunits.

The catalysed reaction is L-glutamyl-tRNA(Gln) + L-glutamine + ATP + H2O = L-glutaminyl-tRNA(Gln) + L-glutamate + ADP + phosphate + H(+). It catalyses the reaction L-aspartyl-tRNA(Asn) + L-glutamine + ATP + H2O = L-asparaginyl-tRNA(Asn) + L-glutamate + ADP + phosphate + 2 H(+). Allows the formation of correctly charged Asn-tRNA(Asn) or Gln-tRNA(Gln) through the transamidation of misacylated Asp-tRNA(Asn) or Glu-tRNA(Gln) in organisms which lack either or both of asparaginyl-tRNA or glutaminyl-tRNA synthetases. The reaction takes place in the presence of glutamine and ATP through an activated phospho-Asp-tRNA(Asn) or phospho-Glu-tRNA(Gln). The protein is Aspartyl/glutamyl-tRNA(Asn/Gln) amidotransferase subunit C of Mycolicibacterium smegmatis (strain ATCC 700084 / mc(2)155) (Mycobacterium smegmatis).